Reading from the N-terminus, the 89-residue chain is Small ribosomal subunit protein uS14 (89 aa).

The protein belongs to the universal ribosomal protein uS14 family. As to quaternary structure, part of the 30S ribosomal subunit. Contacts proteins S3 and S10.

Its function is as follows. Binds 16S rRNA, required for the assembly of 30S particles and may also be responsible for determining the conformation of the 16S rRNA at the A site. The polypeptide is Small ribosomal subunit protein uS14 (Flavobacterium psychrophilum (strain ATCC 49511 / DSM 21280 / CIP 103535 / JIP02/86)).